A 156-amino-acid polypeptide reads, in one-letter code: uncharacterized protein (156 aa).

The next 3 membrane-spanning stretches (helical) occupy residues 42–59 (LLMMTFAIVNLADYMTTV), 79–98 (ASFLLLKIAIVATAFALLLY), and 105–127 (SLGRGIYIGLVAGLAISTAVLGI).

The protein resides in the cell membrane. This is an uncharacterized protein from Archaeoglobus fulgidus (strain ATCC 49558 / DSM 4304 / JCM 9628 / NBRC 100126 / VC-16).